The primary structure comprises 504 residues: Glutamate--tRNA ligase (504 aa).

The 'HIGH' region motif lies at 27-37; the sequence is PSPTGTPHVGL. A 'KMSKS' region motif is present at residues 271 to 275; sequence KLSKR. Lys274 provides a ligand contact to ATP.

This sequence belongs to the class-I aminoacyl-tRNA synthetase family. Glutamate--tRNA ligase type 1 subfamily. Monomer.

The protein resides in the cytoplasm. It carries out the reaction tRNA(Glu) + L-glutamate + ATP = L-glutamyl-tRNA(Glu) + AMP + diphosphate. Catalyzes the attachment of glutamate to tRNA(Glu) in a two-step reaction: glutamate is first activated by ATP to form Glu-AMP and then transferred to the acceptor end of tRNA(Glu). The polypeptide is Glutamate--tRNA ligase (Arthrobacter sp. (strain FB24)).